Reading from the N-terminus, the 71-residue chain is Large ribosomal subunit protein bL31 (71 aa).

Cys16, Cys18, Cys38, and Cys41 together coordinate Zn(2+).

It belongs to the bacterial ribosomal protein bL31 family. Type A subfamily. In terms of assembly, part of the 50S ribosomal subunit. Requires Zn(2+) as cofactor.

In terms of biological role, binds the 23S rRNA. In Neisseria meningitidis serogroup A / serotype 4A (strain DSM 15465 / Z2491), this protein is Large ribosomal subunit protein bL31.